The chain runs to 1861 residues: Golgi-specific brefeldin A-resistance guanine nucleotide exchange factor 1 (1861 aa).

Residues 1-211 (MVDKNIYIIQ…EPKSYVGTNM (211 aa)) form a DCB; DCB:DCB domain and DCB:HUS domain interaction region. The segment at 1 to 380 (MVDKNIYIIQ…SVHDMDYVNP (380 aa)) is interaction with RAB1B. Disordered regions lie at residues 210–264 (NMKK…LTGG) and 289–353 (CTDS…VESI). A compositionally biased stretch (basic residues) spans 227–241 (WKKQKRSPRPPRHTT). Residues 253–262 (NGATLPSNLT) show a composition bias toward polar residues. A phosphoserine mark is found at Ser-349 and Ser-352. Thr-507 is modified (phosphothreonine). The segment at 530–550 (RIPSFVTELYINYDCDYYCSN) is HUS; DCB:HUS domain interaction. The disordered stretch occupies residues 603–634 (QEKKETARPGFEAVDGNPETNKSERATSDGKS). Residues 692–882 (ELIEIKNKKK…EDMYHAIKNE (191 aa)) form the SEC7 domain. Residues 886 to 1372 (MPEEQTGLVR…LSRPGPSPLV (487 aa)) are phosphatidylinositol-phosphate binding; required for translocation to the leading edge and for ARF1 activation upon GPCR signaling. Positions 1286–1296 (TARADAPDAGA) are enriched in low complexity. Residues 1286 to 1335 (TARADAPDAGAQSDSELPSYHQNDVSLDRGYTSDSEVYTDHGRPGKIHRS) are disordered. A compositionally biased stretch (polar residues) spans 1297–1310 (QSDSELPSYHQNDV). Phosphoserine is present on Ser-1298. Residue Tyr-1316 is modified to Phosphotyrosine. Phosphoserine occurs at positions 1318, 1320, and 1335. The residue at position 1337 (Thr-1337) is a Phosphothreonine. 2 disordered regions span residues 1431–1486 (GCKS…EGVP) and 1727–1812 (PMPA…PLIL). Residues 1434–1448 (SQDKRSKSHKYDSKG) are compositionally biased toward basic and acidic residues. Ser-1477, Ser-1775, and Ser-1786 each carry phosphoserine. A compositionally biased stretch (low complexity) spans 1776 to 1793 (TRAPSSSSPGSPMASSPS).

As to quaternary structure, can form homodimers and probably homotetramers. Interacts with COPG1; the interaction is independent on ARF1 activation. Interacts with ARF1, ARF3, ARF4 and ARF5. Interacts with RAB1B (GTP-bound form); required for GBF1 membrane association. Interacts with GGA1, GGA2 and GGA3. Interacts with USO1. Interacts (via SEC7 domain) with PNPLA2 (via C-terminus); the interaction is direct. Interacts with ARMH3.

It localises to the golgi apparatus. Its subcellular location is the cis-Golgi network. The protein resides in the endoplasmic reticulum-Golgi intermediate compartment. It is found in the trans-Golgi network. The protein localises to the cytoplasm. It localises to the lipid droplet. Its subcellular location is the membrane. Its function is as follows. Guanine-nucleotide exchange factor (GEF) for members of the Arf family of small GTPases involved in trafficking in the early secretory pathway; its GEF activity initiates the coating of nascent vesicles via the localized generation of activated ARFs through replacement of GDP with GTP. Recruitment to cis-Golgi membranes requires membrane association of Arf-GDP and can be regulated by ARF1, ARF3, ARF4 and ARF5. Involved in the recruitment of the COPI coat complex to the endoplasmic reticulum exit sites (ERES), and the endoplasmic reticulum-Golgi intermediate (ERGIC) and cis-Golgi compartments which implicates ARF1 activation. Involved in COPI vesicle-dependent retrograde transport from the ERGIC and cis-Golgi compartments to the endoplasmic reticulum (ER). Involved in the trans-Golgi network recruitment of GGA1, GGA2, GGA3, BIG1, BIG2, and the AP-1 adaptor protein complex related to chlathrin-dependent transport; the function requires its GEF activity (probably at least in part on ARF4 and ARF5). Has GEF activity towards ARF1. Has in vitro GEF activity towards ARF5. Involved in the processing of PSAP. Required for the assembly of the Golgi apparatus. The AMPK-phosphorylated form is involved in Golgi disassembly during mitotis and under stress conditions. May be involved in the COPI vesicle-dependent recruitment of PNPLA2 to lipid droplets; however, this function is under debate. In neutrophils, involved in G protein-coupled receptor (GPCR)-mediated chemotaxis und superoxide production. Proposed to be recruited by phosphatidylinositol-phosphates generated upon GPCR stimulation to the leading edge where it recruits and activates ARF1, and is involved in recruitment of GIT2 and the NADPH oxidase complex. Plays a role in maintaining mitochondrial morphology. This chain is Golgi-specific brefeldin A-resistance guanine nucleotide exchange factor 1, found in Mus musculus (Mouse).